Reading from the N-terminus, the 339-residue chain is Fructose-1,6-bisphosphatase isozyme 2 (339 aa).

The segment at 3 to 10 is important for interaction with ALDOA; sequence DRSPFETD. AMP is bound by residues Val-18 and 28 to 32; that span reads TGELT. Positions 69 and 98 each coordinate Mg(2+). 113–114 contacts AMP; sequence KY. The Mg(2+) site is built by Asp-119, Leu-121, and Asp-122. Residue Asp-122 participates in substrate binding. Residue Arg-141 coordinates AMP. The short motif at 204 to 208 is the Nuclear localization signal element; it reads KKKGK. Residue 213-216 participates in substrate binding; the sequence is NEGY. Tyr-216 and Tyr-219 each carry phosphotyrosine. Substrate-binding positions include 245–249, Tyr-265, and Lys-275; that span reads YVGSM. Residue Glu-281 coordinates Mg(2+).

The protein belongs to the FBPase class 1 family. Homotetramer. Interacts with ALDOA; the interaction blocks inhibition by physiological concentrations of AMP and reduces inhibition by Ca(2+). Interacts with alpha-actinin and F-actin. Mg(2+) is required as a cofactor.

The protein localises to the cell junction. It is found in the cytoplasm. It localises to the nucleus. The protein resides in the myofibril. Its subcellular location is the sarcomere. The protein localises to the z line. It carries out the reaction beta-D-fructose 1,6-bisphosphate + H2O = beta-D-fructose 6-phosphate + phosphate. The protein operates within carbohydrate biosynthesis; gluconeogenesis. Its activity is regulated as follows. Subject to complex allosteric regulation. The enzyme can assume an active R-state, or an inactive T-state. Intermediate conformations may exist. AMP acts as an allosteric inhibitor. Fructose 2,6-bisphosphate acts as a competitive inhibitor. Strongly inhibited by Ca(2+). Functionally, catalyzes the hydrolysis of fructose 1,6-bisphosphate to fructose 6-phosphate in the presence of divalent cations and probably participates in glycogen synthesis from carbohydrate precursors, such as lactate. The chain is Fructose-1,6-bisphosphatase isozyme 2 (FBP2) from Bos taurus (Bovine).